The sequence spans 244 residues: Protein crossbronx (244 aa).

The UBC core domain occupies glutamine 20–glutamate 176. A disordered region spans residues alanine 209–glutamate 244.

It belongs to the ubiquitin-conjugating enzyme family. FTS subfamily.

This Drosophila simulans (Fruit fly) protein is Protein crossbronx (cbx).